We begin with the raw amino-acid sequence, 539 residues long: MRVNNLTPQDLKAYGINDVQDIVYNPSYDTLYQEELNPGLEGYERGVLTNLGAVAVDTGIFTGRSPKDKYIVRDDTTRDTLWWSDKGKGKNDNKPLSQETWQHLKGLVTHQLSGKRLFIVDAFCGANADTRLSVRFITEVAWQAHFVKNMFIRPTDEELVGFKPDFIVMNGAKCTNPQWKEQGLNSENFVAFNLTERIQLIGGTWYGGEMKKGMFSVMNYLLPLKGIASMHCSANVGEKGDVAVFFGLSGTGKTTLSTDPKRRLIGDDEHGWDDDGVFNFEGGCYAKTIKLSKEAEPEIYHAIRRDALLENVTVREDGTVDFDDGSKTENTRVSYPIYHIDNIVKPVSKAGHATKVIFLTADAFGVLPPVSRLTANQTQYHFLSGFTAKLAGTERGVTEPTPTFSACFGAAFLTLHPTQYAEVLVKRMQAAGAQAYLVNTGWNGTGKRISIKDTRAIIDAILNGSLDNAETFRLPLFDLAIPTELPGVDTHILDPRNTYASPEQWQEKATALAKLFIENFEKYTDTPAGEALVSAGPKL.

The substrate site is built by R64, Y206, and K212. ATP contacts are provided by residues K212, H231, and G247–T255. Positions 212 and 231 each coordinate Mn(2+). D268 is a binding site for Mn(2+). ATP-binding positions include E296, R332, R448 to I449, and T454. R332 serves as a coordination point for substrate.

It belongs to the phosphoenolpyruvate carboxykinase (ATP) family. In terms of assembly, monomer. It depends on Mn(2+) as a cofactor.

It is found in the cytoplasm. It carries out the reaction oxaloacetate + ATP = phosphoenolpyruvate + ADP + CO2. It functions in the pathway carbohydrate biosynthesis; gluconeogenesis. In terms of biological role, involved in the gluconeogenesis. Catalyzes the conversion of oxaloacetate (OAA) to phosphoenolpyruvate (PEP) through direct phosphoryl transfer between the nucleoside triphosphate and OAA. The chain is Phosphoenolpyruvate carboxykinase (ATP) from Salmonella agona (strain SL483).